A 64-amino-acid polypeptide reads, in one-letter code: Lantipeptide Flvbeta.d (64 aa).

The propeptide at 1-31 (MDNNTEKFNELAAIADESELNEMLDENITGA) is cleaved by FlvT. The lanthionine (Ser-Cys); by FlvM2 cross-link spans 33–37 (STIQC). Residues Thr-34 and Thr-41 each carry the 2,3-didehydrobutyrine; by FlvM2 modification. Cross-links (beta-methyllanthionine (Thr-Cys); by FlvM2) lie at residues 44 to 52 (TILSVVFDC), 55 to 58 (TSAC), and 59 to 62 (TPPC). The lanthionine (Ser-Cys); by FlvM2 cross-link spans 47-53 (SVVFDCC).

Contains LL-lanthionine, DL-lanthionine, and DL-beta-methyllanthionine, when coepressed in E.coli with the flavecin synthetase FlvM2.

It localises to the secreted. In terms of biological role, lanthionine-containing peptide that does probably not show antibacterial activity, since its analog [+2]Flvbeta.d does not show antibacterial activity against M.luteus. Also does not show antibiotic activity when tested with [Del2]Flvalpha.a, an analog of Flvalpha.a, which is encoded by the same operon than Flvbeta.d. The bactericidal activity of lantibiotics is based on depolarization of energized bacterial cytoplasmic membranes, initiated by the formation of aqueous transmembrane pores. The chain is Lantipeptide Flvbeta.d from Ruminococcus flavefaciens.